A 485-amino-acid chain; its full sequence is Bifunctional protein HldE (485 aa).

The tract at residues 1–326 (MDFSSTRVLC…AELDESAISN (326 aa)) is ribokinase. Residue 195 to 198 (NVKE) coordinates ATP. The active site involves aspartate 271. Positions 354–485 (FTNGCFDILH…GIVKKISTLT (132 aa)) are cytidylyltransferase.

It in the N-terminal section; belongs to the carbohydrate kinase PfkB family. This sequence in the C-terminal section; belongs to the cytidylyltransferase family. Homodimer.

The enzyme catalyses D-glycero-beta-D-manno-heptose 7-phosphate + ATP = D-glycero-beta-D-manno-heptose 1,7-bisphosphate + ADP + H(+). It catalyses the reaction D-glycero-beta-D-manno-heptose 1-phosphate + ATP + H(+) = ADP-D-glycero-beta-D-manno-heptose + diphosphate. Its pathway is nucleotide-sugar biosynthesis; ADP-L-glycero-beta-D-manno-heptose biosynthesis; ADP-L-glycero-beta-D-manno-heptose from D-glycero-beta-D-manno-heptose 7-phosphate: step 1/4. It functions in the pathway nucleotide-sugar biosynthesis; ADP-L-glycero-beta-D-manno-heptose biosynthesis; ADP-L-glycero-beta-D-manno-heptose from D-glycero-beta-D-manno-heptose 7-phosphate: step 3/4. Functionally, catalyzes the phosphorylation of D-glycero-D-manno-heptose 7-phosphate at the C-1 position to selectively form D-glycero-beta-D-manno-heptose-1,7-bisphosphate. Catalyzes the ADP transfer from ATP to D-glycero-beta-D-manno-heptose 1-phosphate, yielding ADP-D-glycero-beta-D-manno-heptose. The sequence is that of Bifunctional protein HldE from Granulibacter bethesdensis (strain ATCC BAA-1260 / CGDNIH1).